The following is a 210-amino-acid chain: Protein-L-isoaspartate O-methyltransferase (210 aa).

The active site involves Ser-59.

It belongs to the methyltransferase superfamily. L-isoaspartyl/D-aspartyl protein methyltransferase family.

It is found in the cytoplasm. It catalyses the reaction [protein]-L-isoaspartate + S-adenosyl-L-methionine = [protein]-L-isoaspartate alpha-methyl ester + S-adenosyl-L-homocysteine. In terms of biological role, catalyzes the methyl esterification of L-isoaspartyl residues in peptides and proteins that result from spontaneous decomposition of normal L-aspartyl and L-asparaginyl residues. It plays a role in the repair and/or degradation of damaged proteins. The polypeptide is Protein-L-isoaspartate O-methyltransferase (Nitratidesulfovibrio vulgaris (strain ATCC 29579 / DSM 644 / CCUG 34227 / NCIMB 8303 / VKM B-1760 / Hildenborough) (Desulfovibrio vulgaris)).